The sequence spans 80 residues: Large ribosomal subunit protein bL31B (80 aa).

This sequence belongs to the bacterial ribosomal protein bL31 family. Type B subfamily. As to quaternary structure, part of the 50S ribosomal subunit.

This is Large ribosomal subunit protein bL31B from Shouchella clausii (strain KSM-K16) (Alkalihalobacillus clausii).